The following is a 1201-amino-acid chain: Kinesin-like protein costa (1201 aa).

One can recognise a Kinesin motor domain in the interval Pro-4–Val-391. Residues Ser-23–Tyr-92 are disordered. Positions Glu-28 to Asn-56 are enriched in basic and acidic residues. Positions Pro-57 to Asp-75 are enriched in polar residues. ATP is bound at residue Gly-175–Ser-182. Disordered stretches follow at residues Ala-502–Asp-536, His-565–Leu-606, and Ala-618–Ser-639. The segment covering Ser-510–Asp-521 has biased composition (low complexity). 2 positions are modified to phosphoserine: Ser-599 and Ser-605. Coiled-coil stretches lie at residues Ala-652–Lys-821 and Thr-968–Leu-1001.

Belongs to the TRAFAC class myosin-kinesin ATPase superfamily. Kinesin family. KIF27 subfamily. In terms of assembly, homodimer (Potential). Binds microtubules. Interacts with ci, smo, sgg, CkIalpha and protein kinase A catalytic subunit. Interacts (via kinesin motor domain) with Ubr3. Post-translationally, polyubiquitinated by Ubr3, which leads to proteasomal degradation.

Its subcellular location is the cytoplasm. It is found in the cytoskeleton. In terms of biological role, regulates cubitus interruptus (ci) processing by recruiting multiple kinases to promote its efficient phosphorylation. Scaffolds multiple kinases and ci into proximity to promote its hyperphosphorylation, which then targets it for SCFSlimb/proteasome-mediated processing to generate its repressor form. Hh signaling inhibits ci phosphorylation by interfering with the cos-ci-kinases complex formation. Negatively regulates hh-signaling pathways during various processes, including photoreceptor differentiation. May negatively regulate a hh-signaling pathway which functions in the intestinal immune response to bacterial uracil by activating the Duox-dependent production of reactive oxygen species (ROS). This is Kinesin-like protein costa (cos) from Drosophila melanogaster (Fruit fly).